A 398-amino-acid polypeptide reads, in one-letter code: Ubiquitin-like modifier-activating enzyme 5 (398 aa).

Residues Gly76, Asp97, Lys120, Asn143, and Asn177 each contribute to the ATP site. Residues Cys219 and Cys222 each contribute to the Zn(2+) site. The active-site Glycyl thioester intermediate is the Cys243. Zn(2+)-binding residues include Cys296 and Cys301.

It belongs to the ubiquitin-activating E1 family. UBA5 subfamily.

Functionally, E1-like enzyme which activates UFM1. The protein is Ubiquitin-like modifier-activating enzyme 5 of Drosophila grimshawi (Hawaiian fruit fly).